The primary structure comprises 484 residues: Auxin transporter-like protein 2 (484 aa).

The Cytoplasmic portion of the chain corresponds to 1 to 59 (MLPQKQGEEAIVSSFNETDQQEGVVGREEEVEDHSFSVKNFLWHGGSVWDAWFSCASNQ). A helical membrane pass occupies residues 60-77 (VAQVLLTLPYSFSQLGML). At 78 to 79 (SG) the chain is on the extracellular side. The helical transmembrane segment at 80–100 (ILLQVFYGILGSWTAYLISVL) threads the bilayer. The Cytoplasmic segment spans residues 101 to 135 (YVEYRSRKEKENVNFKNHVIQWFEVLDGLLGPYWK). A helical transmembrane segment spans residues 136-156 (ALGLAFNCTFLLFGSVIQLIA). Topologically, residues 157–172 (CASNIYYINDNLDKRT) are extracellular. A helical membrane pass occupies residues 173-193 (WTYIFGACCATTVFIPSFHNY). At 194–196 (RIW) the chain is on the cytoplasmic side. Residues 197 to 217 (SFLGLGMTTYTAWYLTIASIV) traverse the membrane as a helical segment. Residues 218–232 (HGQAENVTHTGPKKL) are Extracellular-facing. N-linked (GlcNAc...) asparagine glycosylation is present at asparagine 223. Residues 233-253 (VLYFTGATNILYTFGGHAVTV) traverse the membrane as a helical segment. The Cytoplasmic segment spans residues 254–266 (EIMHAMWKPQKFK). The chain crosses the membrane as a helical span at residues 267–287 (YIYLMATLYVFTLTIPSATAV). The Extracellular portion of the chain corresponds to 288-314 (YWAFGDELLNHSNAFSLLPKNGWRDGA). N-linked (GlcNAc...) asparagine glycosylation occurs at asparagine 297. A helical membrane pass occupies residues 315-335 (VILMLIHQFITFGFACTPLYF). Residues 336 to 356 (VWEKVIGMHDTRSICLRALAR) are Cytoplasmic-facing. Residues 357-377 (LPVVIPIWFLAIIFPFFGPIN) form a helical membrane-spanning segment. Serine 378 is a topological domain (extracellular). A helical membrane pass occupies residues 379-399 (AVGALLVSFTVYIIPSAAHML). Residues 400–425 (TYRKASARKNAAEKPPFFMPSWTAMY) are Cytoplasmic-facing. Residues 426-446 (IFNAFIVIWVLVVGFGFGGWA) form a helical membrane-spanning segment. At 447 to 484 (SMTNFIRQIDTFGLFAKCYQCKPPPVMAAAPPPHALHH) the chain is on the extracellular side.

The protein belongs to the amino acid/polyamine transporter 2 family. Amino acid/auxin permease (AAAP) (TC 2.A.18.1) subfamily. Shoots and roots of nodulating plants. Higher levels in roots, flowers and stems, lower in nodules, leaves, petioles and shoot apices.

It is found in the cell membrane. Carrier protein involved in proton-driven auxin influx. Mediates the formation of auxin gradient from developing leaves (site of auxin biosynthesis) to tips by contributing to the loading of auxin in vascular tissues and facilitating acropetal (base to tip) auxin transport within inner tissues of the root apex, and basipetal (tip to base) auxin transport within outer tissues of the root apex. May be involved in lateral roots and nodules formation. The protein is Auxin transporter-like protein 2 (LAX2) of Medicago truncatula (Barrel medic).